The primary structure comprises 214 residues: Redox-sensing transcriptional repressor Rex (214 aa).

The H-T-H motif DNA-binding region spans 16-55 (LYYRYLIFLNDEGKEKVSSTELAEAVQVDSASIRRDFSYF). 90-95 (GVGNMG) contributes to the NAD(+) binding site.

The protein belongs to the transcriptional regulatory Rex family. In terms of assembly, homodimer.

The protein resides in the cytoplasm. Functionally, modulates transcription in response to changes in cellular NADH/NAD(+) redox state. The sequence is that of Redox-sensing transcriptional repressor Rex from Lactobacillus gasseri (strain ATCC 33323 / DSM 20243 / BCRC 14619 / CIP 102991 / JCM 1131 / KCTC 3163 / NCIMB 11718 / NCTC 13722 / AM63).